Consider the following 1535-residue polypeptide: CLIP-associating protein 1 (1535 aa).

2 HEAT repeats span residues 87–124 (AQIG…QAAN) and 163–200 (LTLS…HVGE). A disordered region spans residues 237-290 (NEKNFDDEDSVDGNRPSSASSSSSKAPSSSRRNVNLGTTRRLMSSSLGSKSSAA). Ser246 bears the Phosphoserine mark. The span at 252 to 266 (PSSASSSSSKAPSSS) shows a compositional bias: low complexity. The span at 267 to 279 (RRNVNLGTTRRLM) shows a compositional bias: polar residues. Positions 280-290 (SSSLGSKSSAA) are enriched in low complexity. HEAT repeat units follow at residues 405–440 (HGAE…IRHT) and 441–477 (HIPR…EWQT). 2 disordered regions span residues 543-600 (SDSI…RSRS) and 612-782 (SKVS…GRIP). A phosphoserine mark is found at Ser545, Ser548, Ser558, Ser559, and Ser568. A compositionally biased stretch (low complexity) spans 548–567 (SLPQSDRSSSSSQESLNRPL). The span at 579-594 (SRGSTVSTKSVSTTGS) shows a compositional bias: low complexity. Phosphoserine is present on Ser600. The span at 612–633 (SKVSSSSGSPAFSSAAALPPGS) shows a compositional bias: low complexity. Ser636, Ser646, Ser647, and Ser649 each carry phosphoserine. Residues 645-658 (QSSGSTTNVASTPD) are compositionally biased toward polar residues. Position 656 is a phosphothreonine (Thr656). The interval 662 to 782 (RSRAKVVSQS…FGLGQSGRIP (121 aa)) is interaction with microtubules, MAPRE1 and MAPRE3. Positions 673-695 (RSRSANPAGAGSRSSSPGKLLGS) are enriched in low complexity. 4 positions are modified to phosphoserine: Ser684, Ser688, Ser695, and Ser702. Phosphothreonine is present on Thr708. Ser711 bears the Phosphoserine mark. Over residues 721–730 (QGCSRETSPN) the composition is skewed to polar residues. Phosphoserine occurs at positions 784, 794, and 820. One copy of the HEAT 5 repeat lies at 971–1008 (QQFNILMRFIVDQTQTPNLKVKVAILKYIESLARQMDP). The interval 1078–1157 (LKNSSNTGVG…APSHKTLRRS (80 aa)) is disordered. Residues 1079–1094 (KNSSNTGVGSPSNTIG) show a composition bias toward polar residues. Position 1088 is a phosphoserine (Ser1088). Phosphothreonine is present on residues Thr1092 and Thr1096. The span at 1103 to 1112 (SRTSPLTSPT) shows a compositional bias: low complexity. Phosphoserine is present on residues Ser1110, Phe1139, and Ser1193. The span at 1200-1213 (PIKRDGKKDCDIVS) shows a compositional bias: basic and acidic residues. 2 disordered regions span residues 1200-1233 (PIKR…EIEG) and 1245-1266 (LNTQ…PYPY). A Phosphoserine modification is found at Ser1220. Residues 1251-1535 (RAFPGPRARE…SSSSDVSTHS (285 aa)) form an interaction with CLIP2 and RSN region. The interaction with PHLDB2 stretch occupies residues 1251–1535 (RAFPGPRARE…SSSSDVSTHS (285 aa)). A localization to kinetochores region spans residues 1253–1535 (FPGPRAREYN…SSSSDVSTHS (283 aa)). Positions 1296–1327 (DHSDLVADLLKELSNHNERVEERKGALLELLK) form a coiled coil. HEAT repeat units lie at residues 1339-1376 (EHFK…NQPA) and 1457-1494 (QLLV…VIGE).

It belongs to the CLASP family. As to quaternary structure, interacts with ERC1, MAPRE1, MAPRE3, microtubules, and PHLDB2. The interaction with ERC1 may be mediated by PHLDB2. Interacts with GCC2; recruits CLASP1 to Golgi membranes. Interacts with CLIP2 and RSN. Interacts with MACF1. Interacts with mtcl2 and MTCL1. Highly expressed in brain and heart and at lower levels in kidney, lung, skeletal muscle and testis.

The protein resides in the cytoplasm. It is found in the cytoskeleton. It localises to the microtubule organizing center. The protein localises to the centrosome. Its subcellular location is the chromosome. The protein resides in the centromere. It is found in the kinetochore. It localises to the spindle. The protein localises to the golgi apparatus. Its subcellular location is the trans-Golgi network. Its function is as follows. Microtubule plus-end tracking protein that promotes the stabilization of dynamic microtubules. Involved in the nucleation of noncentrosomal microtubules originating from the trans-Golgi network (TGN). Required for the polarization of the cytoplasmic microtubule arrays in migrating cells towards the leading edge of the cell. May act at the cell cortex to enhance the frequency of rescue of depolymerizing microtubules by attaching their plus-ends to cortical platforms composed of ERC1 and PHLDB2. This cortical microtubule stabilizing activity is regulated at least in part by phosphatidylinositol 3-kinase signaling. Also performs a similar stabilizing function at the kinetochore which is essential for the bipolar alignment of chromosomes on the mitotic spindle. This is CLIP-associating protein 1 (Clasp1) from Mus musculus (Mouse).